The primary structure comprises 450 residues: Phosphoglucosamine mutase (450 aa).

Ser101 (phosphoserine intermediate) is an active-site residue. Residues Ser101, Asp240, Asp242, and Asp244 each coordinate Mg(2+). Ser101 bears the Phosphoserine mark.

Belongs to the phosphohexose mutase family. Requires Mg(2+) as cofactor. In terms of processing, activated by phosphorylation.

It catalyses the reaction alpha-D-glucosamine 1-phosphate = D-glucosamine 6-phosphate. Catalyzes the conversion of glucosamine-6-phosphate to glucosamine-1-phosphate. The chain is Phosphoglucosamine mutase from Streptococcus agalactiae serotype Ia (strain ATCC 27591 / A909 / CDC SS700).